The following is a 427-amino-acid chain: Glutamyl-tRNA reductase (427 aa).

Residues 49-52, S101, 106-108, and Q112 contribute to the substrate site; these read TCNR and EPQ. Residue C50 is the Nucleophile of the active site. 181–186 is a binding site for NADP(+); that stretch reads GAGETI. Positions 407-427 are disordered; sequence FPATPGYRHPPVRPDDADPAP. A compositionally biased stretch (basic and acidic residues) spans 418 to 427; sequence VRPDDADPAP.

Belongs to the glutamyl-tRNA reductase family. Homodimer.

It carries out the reaction (S)-4-amino-5-oxopentanoate + tRNA(Glu) + NADP(+) = L-glutamyl-tRNA(Glu) + NADPH + H(+). The protein operates within porphyrin-containing compound metabolism; protoporphyrin-IX biosynthesis; 5-aminolevulinate from L-glutamyl-tRNA(Glu): step 1/2. Its function is as follows. Catalyzes the NADPH-dependent reduction of glutamyl-tRNA(Glu) to glutamate 1-semialdehyde (GSA). In Stenotrophomonas maltophilia (strain K279a), this protein is Glutamyl-tRNA reductase.